The chain runs to 368 residues: Ethanol acetyltransferase 1 (368 aa).

Residues 1-21 (MFLSLRPSLSVSRLAVVRRAY) constitute a mitochondrion transit peptide. The AB hydrolase-1 domain occupies 67–171 (PIIFFHGLLG…IIDNAPEPQP (105 aa)). Catalysis depends on charge relay system residues Ser-140, Asp-164, and His-315. Residues 344–368 (RNKDPNNYMQTQNSISNSDTMGQSL) are disordered. Polar residues predominate over residues 348 to 368 (PNNYMQTQNSISNSDTMGQSL).

It belongs to the AB hydrolase superfamily.

Its subcellular location is the mitochondrion. It carries out the reaction ethanol + acetyl-CoA = ethyl acetate + CoA. It catalyses the reaction acetyl-CoA + H2O = acetate + CoA + H(+). The catalysed reaction is ethyl acetate + H2O = ethanol + acetate + H(+). Functionally, alcohol acetyltransferase that catalyzes the synthesis of ethyl acetate from ethanol and acetyl-CoA. Can also function as a thioesterase by hydrolyzing acetyl-CoA in the absence of ethanol, as well as esterase hydrolyzing ethyl acetate. The polypeptide is Ethanol acetyltransferase 1 (EAT1) (Kluyveromyces lactis (strain ATCC 8585 / CBS 2359 / DSM 70799 / NBRC 1267 / NRRL Y-1140 / WM37) (Yeast)).